Here is a 125-residue protein sequence, read N- to C-terminus: Large ribosomal subunit protein bL12 (125 aa).

It belongs to the bacterial ribosomal protein bL12 family. In terms of assembly, homodimer. Part of the ribosomal stalk of the 50S ribosomal subunit. Forms a multimeric L10(L12)X complex, where L10 forms an elongated spine to which 2 to 4 L12 dimers bind in a sequential fashion. Binds GTP-bound translation factors.

In terms of biological role, forms part of the ribosomal stalk which helps the ribosome interact with GTP-bound translation factors. Is thus essential for accurate translation. The chain is Large ribosomal subunit protein bL12 from Chlorobium limicola (strain DSM 245 / NBRC 103803 / 6330).